The chain runs to 350 residues: Methylthioribose-1-phosphate isomerase (350 aa).

Substrate contacts are provided by residues Arg47–Ala49, Arg90, and Gln197. Asp238 serves as the catalytic Proton donor. Substrate is bound at residue Asn248–Lys249.

It belongs to the eIF-2B alpha/beta/delta subunits family. MtnA subfamily.

The catalysed reaction is 5-(methylsulfanyl)-alpha-D-ribose 1-phosphate = 5-(methylsulfanyl)-D-ribulose 1-phosphate. It participates in amino-acid biosynthesis; L-methionine biosynthesis via salvage pathway; L-methionine from S-methyl-5-thio-alpha-D-ribose 1-phosphate: step 1/6. In terms of biological role, catalyzes the interconversion of methylthioribose-1-phosphate (MTR-1-P) into methylthioribulose-1-phosphate (MTRu-1-P). This is Methylthioribose-1-phosphate isomerase from Nitratidesulfovibrio vulgaris (strain DP4) (Desulfovibrio vulgaris).